A 449-amino-acid polypeptide reads, in one-letter code: Baeyer-Villiger oxidase GME11358 (449 aa).

This sequence belongs to the questin oxidase family.

It participates in secondary metabolite biosynthesis. Its function is as follows. Baeyer-Villiger oxidase; part of the gene cluster that mediates the biosynthesis of dibenzodioxocinones such as pestalotiollide B, a novel class of inhibitors against cholesterol ester transfer protein (CEPT). The biosynthesis initiates from condensation of acetate and malonate units catalyzed by the non-reducing PKS pks8/GME11356. Pks8/GME11356 lacks a thioesterase (TE) domain, which is important to the cyclizing of the third ring of atrochrysone carboxylic acid, and the esterase GME11355 might play the role of TE and catalyzes the cyclization reaction of the C ring. The lactamase-like protein GME11357 (or other beta-lactamases in Pestalotiopsis microspora) probably hydrolyzes the thioester bond between the ACP of pks8/GME11356 and the intermediate to release atrochrysone carboxylic acid, which is spontaneously dehydrates to form endocrocin anthrone. Endocrocin anthrone is further converted to emodin via the endocrocin intermediate. Emodin is then oxidized by several enzymes such as the Baeyer-Villiger oxidase GME11358, the oxidoreductase GME11367, the short chain dehydrogenase/reductase GME11373, as well as by other oxidoreductases from the cluster, to modify the A and C rings and open the B ring, and finally yield monodictyphenone. The prenyltransferase GME11375 may catalyze the addition reaction between the C5 side chains and the carbon bone of dibenzodioxocinones. The remaining biochemical reactions to the final product dibenzodioxocinones should be methylation catalyzed by methyltransferase GME11366 and reduction and lactonization reaction catalyzed by a series of oxidordeuctases. The polypeptide is Baeyer-Villiger oxidase GME11358 (Pestalotiopsis microspora).